A 554-amino-acid chain; its full sequence is Phenylalanine--tRNA ligase beta subunit (554 aa).

The B5 domain occupies 276 to 351; that stretch reads LTPKSRIISV…INYGYEKFDG (76 aa). Positions 329, 335, 338, and 339 each coordinate Mg(2+).

It belongs to the phenylalanyl-tRNA synthetase beta subunit family. Type 2 subfamily. Tetramer of two alpha and two beta subunits. Mg(2+) is required as a cofactor.

The protein resides in the cytoplasm. The enzyme catalyses tRNA(Phe) + L-phenylalanine + ATP = L-phenylalanyl-tRNA(Phe) + AMP + diphosphate + H(+). In Methanococcus maripaludis (strain DSM 14266 / JCM 13030 / NBRC 101832 / S2 / LL), this protein is Phenylalanine--tRNA ligase beta subunit.